The following is a 673-amino-acid chain: Zinc finger and BTB domain-containing protein 16 (673 aa).

In terms of domain architecture, BTB spans 34–96; the sequence is CDVVIMVDSQ…AYTATLQAKA (63 aa). Serine 76, serine 184, and serine 197 each carry phosphoserine; by PDPK1. The segment at 200–300 is interaction with RUNX1T1; it reads KAAVDSLMTI…SARELHYGRE (101 aa). Disordered stretches follow at residues 215-236 and 249-332; these read QGTL…GRHP and DEVP…KHLG. The residue at position 256 (serine 256) is a Phosphoserine; by PDPK1. A Phosphothreonine; by PDPK1 modification is found at threonine 282. 2 stretches are compositionally biased toward basic and acidic residues: residues 293-302 and 319-331; these read RELHYGREES and RPEH…EKHL. C2H2-type zinc fingers lie at residues 404-426, 432-454, 461-483, 490-512, 518-540, 546-568, 574-596, and 602-624; these read EQCS…RKLH, YGCE…LLAH, FVCD…RQTH, VFCL…MEVH, YICS…LRSH, YECE…KRIH, YECN…YRVH, and FECK…LRTH. At serine 628 the chain carries Phosphoserine; by PDPK1. A C2H2-type 9 zinc finger spans residues 630–652; that stretch reads YQCTICTEYCPSLSSMQKHMKGH.

Belongs to the krueppel C2H2-type zinc-finger protein family. In terms of assembly, binds EPN1. Interacts with ZBTB32 and CUL3. Interacts with ATP7B. Interacts with transcriptional corepressor RUNX1T1 (via its N-terminus); the interaction increases the transcription repression activity of ZBTB16. Interacts (via C2H2-type zinc finger domains 1 and 2) with RNF112. In terms of tissue distribution, within the hematopoietic system, PLZF is expressed in bone marrow, early myeloid cell lines and peripheral blood mononuclear cells. Also expressed in the ovary, and at lower levels, in the kidney and lung.

It localises to the nucleus. The protein resides in the nuclear body. It functions in the pathway protein modification; protein ubiquitination. Its function is as follows. Acts as a transcriptional repressor. Transcriptional repression may be mediated through recruitment of histone deacetylases to target promoters. May play a role in myeloid maturation and in the development and/or maintenance of other differentiated tissues. Probable substrate-recognition component of an E3 ubiquitin-protein ligase complex which mediates the ubiquitination and subsequent proteasomal degradation of target proteins. The protein is Zinc finger and BTB domain-containing protein 16 (ZBTB16) of Homo sapiens (Human).